Reading from the N-terminus, the 423-residue chain is UDP-N-acetylglucosamine 1-carboxyvinyltransferase 1 (423 aa).

Phosphoenolpyruvate is bound at residue 23–24; the sequence is KN. Arg96 is a UDP-N-acetyl-alpha-D-glucosamine binding site. The active-site Proton donor is the Cys120. Cys120 bears the 2-(S-cysteinyl)pyruvic acid O-phosphothioketal mark. UDP-N-acetyl-alpha-D-glucosamine is bound by residues 125 to 129, Asp309, and Val331; that span reads RPIDL.

The protein belongs to the EPSP synthase family. MurA subfamily.

It localises to the cytoplasm. It carries out the reaction phosphoenolpyruvate + UDP-N-acetyl-alpha-D-glucosamine = UDP-N-acetyl-3-O-(1-carboxyvinyl)-alpha-D-glucosamine + phosphate. It functions in the pathway cell wall biogenesis; peptidoglycan biosynthesis. Cell wall formation. Adds enolpyruvyl to UDP-N-acetylglucosamine. The protein is UDP-N-acetylglucosamine 1-carboxyvinyltransferase 1 of Streptococcus thermophilus (strain ATCC BAA-250 / LMG 18311).